A 232-amino-acid chain; its full sequence is 6-hydroxymethyl-7,8-dihydropterin pyrophosphokinase (232 aa).

Belongs to the archaeal 6-HMPDK family. It depends on Mg(2+) as a cofactor.

It catalyses the reaction 6-hydroxymethyl-7,8-dihydropterin + ATP = (7,8-dihydropterin-6-yl)methyl diphosphate + AMP + H(+). It functions in the pathway cofactor biosynthesis; 5,6,7,8-tetrahydromethanopterin biosynthesis. Functionally, catalyzes the transfer of diphosphate from ATP to 6-hydroxymethyl-7,8-dihydropterin (6-HMD), leading to 6-hydroxymethyl-7,8-dihydropterin diphosphate (6-HMDP). The protein is 6-hydroxymethyl-7,8-dihydropterin pyrophosphokinase of Methanothermobacter thermautotrophicus (strain ATCC 29096 / DSM 1053 / JCM 10044 / NBRC 100330 / Delta H) (Methanobacterium thermoautotrophicum).